A 321-amino-acid polypeptide reads, in one-letter code: Peptidase 1 (321 aa).

Positions 1-18 (MKIILAIASLLVLSAVYA) are cleaved as a signal peptide. A propeptide spanning residues 19 to 98 (RPASIKTFEE…LKTQFDLNAE (80 aa)) is cleaved from the precursor. A glycan (N-linked (GlcNAc...) asparagine) is linked at asparagine 34. A disulfide bridge connects residues cysteine 130 and cysteine 170. The active site involves cysteine 133. N-linked (GlcNAc...) asparagine glycosylation occurs at asparagine 151. Residues histidine 269 and asparagine 289 contribute to the active site.

It belongs to the peptidase C1 family.

The protein resides in the secreted. It catalyses the reaction Broad endopeptidase specificity.. In terms of biological role, probable thiol protease. This Euroglyphus maynei (Mayne's house dust mite) protein is Peptidase 1 (EURM1).